We begin with the raw amino-acid sequence, 335 residues long: Leukocyte cell-derived chemotaxin 1 (335 aa).

The chain crosses the membrane as a helical span at residues 45–65; the sequence is VVLISGAVLLLLGAIGAFYFW. Residues 104–201 enclose the BRICHOS domain; that stretch reads GSGAEEAVEV…LCGDLPIFWL (98 aa). Cys131 and Cys193 form a disulfide bridge. A propeptide spanning residues 211–214 is cleaved from the precursor; that stretch reads RERR. The tract at residues 221–269 is disordered; that stretch reads VTTTTTRRLRSGPQGTPAPGRPNNGTRPSVQEDAEPFNPDNPYHQQEGE. Thr223 is a glycosylation site (N-linked (GlcNAc...) asparagine; in variant 223-N-E-224). Thr236 is a glycosylation site (O-linked (GalNAc...) threonine; partial). Residue Asn244 is glycosylated (N-linked (GlcNAc...) asparagine). Intrachain disulfides connect Cys283–Cys287, Cys284–Cys324, Cys294–Cys318, and Cys298–Cys314.

The protein belongs to the chondromodulin-1 family. In terms of processing, after cleavage, the post-translationally modified ChM-I is secreted as a glycoprotein. Post-translationally, two other smaller nonglycosylated chondromodulin forms (9 kDa and 7 kDa) are found either in developing articular cartilage or in chondrocytes. The 9 kDa form could be processed by an extracellular matrix-associated protease as a metalloproteinase and the 7 kDa form could be processed intracellularly. As to expression, nasal and articular cartilage, and fetal epiphysis.

Its subcellular location is the secreted. The protein resides in the extracellular space. The protein localises to the extracellular matrix. It is found in the endomembrane system. Bifunctional growth regulator that stimulates the growth of cultured chondrocytes in the presence of basic fibroblast growth factor (FGF) but inhibits the growth of cultured vascular endothelial cells. May contribute to the rapid growth of cartilage and vascular invasion prior to the replacement of cartilage by bone during endochondral bone development. Inhibits in vitro tube formation and mobilization of endothelial cells. Plays a role as antiangiogenic factor in cardiac valves to suppress neovascularization. This Bos taurus (Bovine) protein is Leukocyte cell-derived chemotaxin 1.